We begin with the raw amino-acid sequence, 362 residues long: Chorismate synthase (362 aa).

Residue R46 participates in NADP(+) binding. Residues 122-124 (RSS), 238-239 (NA), G278, 293-297 (KPTPS), and R319 each bind FMN.

It belongs to the chorismate synthase family. As to quaternary structure, homotetramer. The cofactor is FMNH2.

It carries out the reaction 5-O-(1-carboxyvinyl)-3-phosphoshikimate = chorismate + phosphate. It functions in the pathway metabolic intermediate biosynthesis; chorismate biosynthesis; chorismate from D-erythrose 4-phosphate and phosphoenolpyruvate: step 7/7. Functionally, catalyzes the anti-1,4-elimination of the C-3 phosphate and the C-6 proR hydrogen from 5-enolpyruvylshikimate-3-phosphate (EPSP) to yield chorismate, which is the branch point compound that serves as the starting substrate for the three terminal pathways of aromatic amino acid biosynthesis. This reaction introduces a second double bond into the aromatic ring system. The protein is Chorismate synthase of Campylobacter jejuni subsp. jejuni serotype O:2 (strain ATCC 700819 / NCTC 11168).